The primary structure comprises 156 residues: ATP synthase subunit b (156 aa).

A helical membrane pass occupies residues 3–23 (ITFTIFAQSIAFAALIWIVAT).

Belongs to the ATPase B chain family. In terms of assembly, F-type ATPases have 2 components, F(1) - the catalytic core - and F(0) - the membrane proton channel. F(1) has five subunits: alpha(3), beta(3), gamma(1), delta(1), epsilon(1). F(0) has three main subunits: a(1), b(2) and c(10-14). The alpha and beta chains form an alternating ring which encloses part of the gamma chain. F(1) is attached to F(0) by a central stalk formed by the gamma and epsilon chains, while a peripheral stalk is formed by the delta and b chains.

It localises to the cell inner membrane. Its function is as follows. F(1)F(0) ATP synthase produces ATP from ADP in the presence of a proton or sodium gradient. F-type ATPases consist of two structural domains, F(1) containing the extramembraneous catalytic core and F(0) containing the membrane proton channel, linked together by a central stalk and a peripheral stalk. During catalysis, ATP synthesis in the catalytic domain of F(1) is coupled via a rotary mechanism of the central stalk subunits to proton translocation. In terms of biological role, component of the F(0) channel, it forms part of the peripheral stalk, linking F(1) to F(0). This is ATP synthase subunit b from Xylella fastidiosa (strain M12).